The following is a 474-amino-acid chain: Coronin-1C (474 aa).

WD repeat units follow at residues 78–118 (GHTG…LTLS), 128–168 (GHSK…ALIN), 172–202 (MHSD…RVID), 215–249 (AHEG…ALWN), and 263–303 (DTSN…PYVH). A coiled-coil region spans residues 435–474 (VQNEAKLDEILKEIKSIKETICSQDERISKLEQQLAKMAA). Lys446 bears the N6-acetyllysine mark.

Belongs to the WD repeat coronin family. Homotrimer. Binds F-actin. Interacts with RCC2. Interacts preferentially with nucleotide-free and GDP-bound RAC1. Interacts with VIM (via head domain). Interacts with MICAL2; this interaction recruits MICAL2 to the actin filaments. Detected in skeletal muscle (at protein level). Detected in fibroblasts (at protein level). Ubiquitous.

The protein resides in the cell membrane. It localises to the cell projection. It is found in the lamellipodium. Its subcellular location is the ruffle membrane. The protein localises to the cytoplasm. The protein resides in the cytoskeleton. It localises to the cell cortex. It is found in the endosome membrane. Functionally, plays a role in directed cell migration by regulating the activation and subcellular location of RAC1. Increases the presence of activated RAC1 at the leading edge of migrating cells. Required for normal organization of the cytoskeleton, including the actin cytoskeleton, microtubules and the vimentin intermediate filaments. Required for normal cell proliferation, cell migration, and normal formation of lamellipodia. Plays a role in endoplasmic reticulum-associated endosome fission: localizes to endosome membrane tubules and promotes recruitment of TMCC1, leading to recruitment of the endoplasmic reticulum to endosome tubules for fission. Endosome membrane fission of early and late endosomes is essential to separate regions destined for lysosomal degradation from carriers to be recycled to the plasma membrane. Required for normal distribution of mitochondria within cells. The sequence is that of Coronin-1C (Coro1c) from Mus musculus (Mouse).